The sequence spans 149 residues: Arginine repressor (149 aa).

The protein belongs to the ArgR family.

It is found in the cytoplasm. It participates in amino-acid biosynthesis; L-arginine biosynthesis [regulation]. Functionally, regulates arginine biosynthesis genes. In Listeria welshimeri serovar 6b (strain ATCC 35897 / DSM 20650 / CCUG 15529 / CIP 8149 / NCTC 11857 / SLCC 5334 / V8), this protein is Arginine repressor.